Here is a 598-residue protein sequence, read N- to C-terminus: Elongation factor 4 (598 aa).

A tr-type G domain is found at 4–186 (SRLRNFSIIA…EIVKKIPPPK (183 aa)). GTP-binding positions include 16 to 21 (DHGKST) and 133 to 136 (NKID).

This sequence belongs to the TRAFAC class translation factor GTPase superfamily. Classic translation factor GTPase family. LepA subfamily.

Its subcellular location is the cell inner membrane. It catalyses the reaction GTP + H2O = GDP + phosphate + H(+). Required for accurate and efficient protein synthesis under certain stress conditions. May act as a fidelity factor of the translation reaction, by catalyzing a one-codon backward translocation of tRNAs on improperly translocated ribosomes. Back-translocation proceeds from a post-translocation (POST) complex to a pre-translocation (PRE) complex, thus giving elongation factor G a second chance to translocate the tRNAs correctly. Binds to ribosomes in a GTP-dependent manner. The protein is Elongation factor 4 of Pelobacter propionicus (strain DSM 2379 / NBRC 103807 / OttBd1).